The primary structure comprises 77 residues: Acyl carrier protein (77 aa).

The 76-residue stretch at 1-76 (MSIEERVKKI…SAIDYVAKAN (76 aa)) folds into the Carrier domain. Ser36 is subject to O-(pantetheine 4'-phosphoryl)serine.

It belongs to the acyl carrier protein (ACP) family. Post-translationally, 4'-phosphopantetheine is transferred from CoA to a specific serine of apo-ACP by AcpS. This modification is essential for activity because fatty acids are bound in thioester linkage to the sulfhydryl of the prosthetic group.

The protein resides in the cytoplasm. It participates in lipid metabolism; fatty acid biosynthesis. Carrier of the growing fatty acid chain in fatty acid biosynthesis. In Haemophilus ducreyi (strain 35000HP / ATCC 700724), this protein is Acyl carrier protein.